The following is an 82-amino-acid chain: Sulfur carrier protein TusA (82 aa).

The Cysteine persulfide intermediate role is filled by C19.

This sequence belongs to the sulfur carrier protein TusA family. In terms of assembly, interacts with IscS.

Its subcellular location is the cytoplasm. Its pathway is tRNA modification. Its function is as follows. Sulfur carrier protein involved in sulfur trafficking in the cell. Part of a sulfur-relay system required for 2-thiolation during synthesis of 2-thiouridine of the modified wobble base 5-methylaminomethyl-2-thiouridine (mnm(5)s(2)U) in tRNA. Interacts with IscS and stimulates its cysteine desulfurase activity. Accepts an activated sulfur from IscS, which is then transferred to TusD, and thus determines the direction of sulfur flow from IscS to 2-thiouridine formation. Also appears to be involved in sulfur transfer for the biosynthesis of molybdopterin. The polypeptide is Sulfur carrier protein TusA (Edwardsiella ictaluri (strain 93-146)).